Here is a 180-residue protein sequence, read N- to C-terminus: MAKLIVAIGNPRHGYANTRHNAGFLLADRLVEELQGPPFKPLSKCHALMTLVESSSGPLVFIKPTTFVNLSGKAVVLAKKYFNVALSHILVLADDVNRSFGKLRLCFNGGSGGHNGLKSITASLGSNEYWQLRFGVGRPLEEGVELSNFVLGKFSEEENLQLGSIFVEASTLFTEWCSKF.

A tRNA-binding site is contributed by Tyr-15. The Proton acceptor role is filled by His-20. The tRNA site is built by Phe-67, Asn-69, and Asn-115.

The protein belongs to the PTH family. As to quaternary structure, monomer.

The protein resides in the cytoplasm. The catalysed reaction is an N-acyl-L-alpha-aminoacyl-tRNA + H2O = an N-acyl-L-amino acid + a tRNA + H(+). Hydrolyzes ribosome-free peptidyl-tRNAs (with 1 or more amino acids incorporated), which drop off the ribosome during protein synthesis, or as a result of ribosome stalling. Its function is as follows. Catalyzes the release of premature peptidyl moieties from peptidyl-tRNA molecules trapped in stalled 50S ribosomal subunits, and thus maintains levels of free tRNAs and 50S ribosomes. The chain is Peptidyl-tRNA hydrolase from Chlamydia pneumoniae (Chlamydophila pneumoniae).